The following is a 252-amino-acid chain: Imidazole glycerol phosphate synthase subunit HisF (252 aa).

Active-site residues include Asp-11 and Asp-130.

It belongs to the HisA/HisF family. In terms of assembly, heterodimer of HisH and HisF.

It localises to the cytoplasm. It catalyses the reaction 5-[(5-phospho-1-deoxy-D-ribulos-1-ylimino)methylamino]-1-(5-phospho-beta-D-ribosyl)imidazole-4-carboxamide + L-glutamine = D-erythro-1-(imidazol-4-yl)glycerol 3-phosphate + 5-amino-1-(5-phospho-beta-D-ribosyl)imidazole-4-carboxamide + L-glutamate + H(+). It participates in amino-acid biosynthesis; L-histidine biosynthesis; L-histidine from 5-phospho-alpha-D-ribose 1-diphosphate: step 5/9. Its function is as follows. IGPS catalyzes the conversion of PRFAR and glutamine to IGP, AICAR and glutamate. The HisF subunit catalyzes the cyclization activity that produces IGP and AICAR from PRFAR using the ammonia provided by the HisH subunit. The polypeptide is Imidazole glycerol phosphate synthase subunit HisF (Geobacillus sp. (strain WCH70)).